We begin with the raw amino-acid sequence, 305 residues long: Ornithine carbamoyltransferase (305 aa).

Carbamoyl phosphate contacts are provided by residues 48–51 (STRT), Arg-99, and 126–129 (HPCQ). L-ornithine is bound by residues Asn-157, Asp-222, and 226–227 (SM). Residues 262–263 (CL) and Arg-290 each bind carbamoyl phosphate.

It belongs to the aspartate/ornithine carbamoyltransferase superfamily. OTCase family.

Its subcellular location is the cytoplasm. It catalyses the reaction carbamoyl phosphate + L-ornithine = L-citrulline + phosphate + H(+). Its pathway is amino-acid biosynthesis; L-arginine biosynthesis; L-arginine from L-ornithine and carbamoyl phosphate: step 1/3. Reversibly catalyzes the transfer of the carbamoyl group from carbamoyl phosphate (CP) to the N(epsilon) atom of ornithine (ORN) to produce L-citrulline. The sequence is that of Ornithine carbamoyltransferase (argF) from Methanocaldococcus jannaschii (strain ATCC 43067 / DSM 2661 / JAL-1 / JCM 10045 / NBRC 100440) (Methanococcus jannaschii).